A 423-amino-acid polypeptide reads, in one-letter code: Myb-like protein G (423 aa).

Positions 36–90 (TISKQRENWTDEEHQKFLEALTLFDRDWKKIESFVGSKTVIQIRSHAQKYFIKVQ) constitute an HTH myb-type domain. A DNA-binding region (H-T-H motif) is located at residues 63-86 (WKKIESFVGSKTVIQIRSHAQKYF). Disordered stretches follow at residues 93–116 (NTGE…QKQK), 177–205 (QQAV…GTTL), and 284–372 (ISPR…LGNY). Residues 177 to 202 (QQAVTTAQSSQRNGGLPPNPSSNNGG) show a composition bias toward low complexity. Positions 286–295 (PRNSTGNINV) are enriched in polar residues. A compositionally biased stretch (low complexity) spans 302–354 (NNSNNNNNNNNNNNNNNNNNNNNNNNNNNNNNNNNNNNNNNNNNNNNNNNNNN). The span at 361 to 372 (QNHSNMVNLGNY) shows a compositional bias: polar residues.

It localises to the nucleus. This is Myb-like protein G (mybG) from Dictyostelium discoideum (Social amoeba).